A 376-amino-acid chain; its full sequence is Dihydroorotate dehydrogenase (quinone) (376 aa).

FMN is bound by residues 74 to 78 (AGFDK) and threonine 98. Lysine 78 contributes to the substrate binding site. Residue 123-127 (NHMGF) coordinates substrate. Positions 152 and 185 each coordinate FMN. Position 185 (asparagine 185) interacts with substrate. The Nucleophile role is filled by serine 188. Asparagine 190 contacts substrate. Lysine 223 and threonine 251 together coordinate FMN. 252–253 (NT) is a binding site for substrate. Residues glycine 280, glycine 309, and 330 to 331 (YT) each bind FMN. A disordered region spans residues 352–376 (RNPAPSSPERMPTGIQSGRKIVMDP).

The protein belongs to the dihydroorotate dehydrogenase family. Type 2 subfamily. Monomer. FMN is required as a cofactor.

The protein resides in the cell membrane. The catalysed reaction is (S)-dihydroorotate + a quinone = orotate + a quinol. It functions in the pathway pyrimidine metabolism; UMP biosynthesis via de novo pathway; orotate from (S)-dihydroorotate (quinone route): step 1/1. Catalyzes the conversion of dihydroorotate to orotate with quinone as electron acceptor. The polypeptide is Dihydroorotate dehydrogenase (quinone) (Synechococcus sp. (strain JA-3-3Ab) (Cyanobacteria bacterium Yellowstone A-Prime)).